The primary structure comprises 80 residues: Conotoxin MaIr193 (80 aa).

An N-terminal signal peptide occupies residues 1 to 22 (MKLTCMMIVAVLFLTAWTLVTA). Residues 23–51 (DGTRDGLKNRFPKARLEMKNSEAPRSRGR) constitute a propeptide that is removed on maturation. Disulfide bonds link C52–C69, C59–C73, and C68–C77. Position 64 is a 4-hydroxyproline (P64).

It belongs to the conotoxin O1 superfamily. In terms of tissue distribution, expressed by the venom duct.

Its subcellular location is the secreted. The chain is Conotoxin MaIr193 from Conus marmoreus (Marble cone).